The chain runs to 172 residues: Small ribosomal subunit protein uS5 (172 aa).

The region spanning 17–80 (MREKMIAVNR…EEARRKMIKV (64 aa)) is the S5 DRBM domain.

It belongs to the universal ribosomal protein uS5 family. Part of the 30S ribosomal subunit. Contacts proteins S4 and S8.

In terms of biological role, with S4 and S12 plays an important role in translational accuracy. Located at the back of the 30S subunit body where it stabilizes the conformation of the head with respect to the body. The sequence is that of Small ribosomal subunit protein uS5 from Herminiimonas arsenicoxydans.